The sequence spans 1666 residues: Atrochrysone carboxylic acid synthase PKS4 (1666 aa).

Residues 15-452 enclose the Ketosynthase family 3 (KS3) domain; it reads FEPIAIVGIG…GNAGFMVIEE (438 aa). Residues Cys194, His332, and His372 each act as for beta-ketoacyl synthase activity in the active site. Residues 555 to 863 are malonyl-CoA:ACP transacylase (MAT) domain; it reads AFCFSGQGGE…WMTALDALMR (309 aa). Ser632 functions as the For acyl/malonyl transferase activity in the catalytic mechanism. Residues 905–1034 are N-terminal hotdog fold; sequence REVKASSTML…EQDLLESLSL (130 aa). One can recognise a PKS/mFAS DH domain in the interval 905–1206; the sequence is REVKASSTML…MAKMKIYVLK (302 aa). Positions 935 to 1203 are product template (PT) domain; it reads LLNHVMAGYT…DVRMAKMKIY (269 aa). The C-terminal hotdog fold stretch occupies residues 1050-1206; the sequence is STDVLRKELA…MAKMKIYVLK (157 aa). Residue Ser1269 is modified to O-(pantetheine 4'-phosphoryl)serine. In terms of domain architecture, Carrier spans 1331–1395; that stretch reads ATSPSLPIMP…TSTEPSQTLV (65 aa). A proline-rich linker region region spans residues 1334–1397; the sequence is PSLPIMPNGV…TEPSQTLVAN (64 aa). An alpha/beta hydrolase superfamily-type thioesterase (TE) domain region spans residues 1444-1529; sequence TVIGIHCPGL…PPGVVGLTAQ (86 aa).

The catalysed reaction is holo-[ACP] + 8 malonyl-CoA + 8 H(+) = atrochrysone carboxyl-[ACP] + 8 CO2 + 8 CoA + 2 H2O. The protein operates within secondary metabolite biosynthesis. In terms of biological role, non-reducing polyketide synthase that synthesizes the universal anthraquinone precursor atrochrysone carboxylic acid from malonyl-CoA. Produces a mixture of both 3R and 3S enantiomers with an excess of the 3S form. PKS4 catalyzes both hepta- and octaketide synthesis and also yields 6-hydroxymusizin, probably via carboxylating activity inherent to the KS domain. This chain is Atrochrysone carboxylic acid synthase PKS4, found in Calonarius odorifer (Mushroom).